The sequence spans 265 residues: Protein Exd1 homolog (265 aa).

Positions 32–82 constitute a 3'-5' exonuclease domain; it reads EKQLDRIVLIYQVDTTYHSALKDIKDQKIISLLVEPSFYGRHHPTSILVVA.

Belongs to the EXD1 family. As to quaternary structure, homodimer.

Its function is as follows. RNA-binding protein. Inactive exonuclease. The chain is Protein Exd1 homolog from Drosophila melanogaster (Fruit fly).